A 554-amino-acid chain; its full sequence is Acurin A biosynthesis cluster MFS-type transporter (554 aa).

The next 5 helical transmembrane spans lie at 24 to 44 (WLIF…TSII), 60 to 80 (LYIW…AIVG), 96 to 116 (LLIF…GMLL), 123 to 143 (GLGG…MVSL), and 151 to 171 (GILG…GGGF). The N-linked (GlcNAc...) asparagine glycan is linked to asparagine 174. 3 helical membrane-spanning segments follow: residues 179–199 (WIFY…VTLL), 219–239 (WGGI…LTWA), and 251–271 (IVPL…EALP). A glycan (N-linked (GlcNAc...) asparagine) is linked at asparagine 283. Helical transmembrane passes span 289–309 (LFVM…FLPI), 324–344 (VMLF…GILM), 352–372 (SFQY…TLLD), 385–405 (ILFG…ILAS), 417–437 (TWIF…AAVF), and 496–516 (VWQV…LVKA).

It belongs to the major facilitator superfamily.

It is found in the membrane. Functionally, MFS-type transporter that may have a role in the biosynthesis of acurin A, a highly reduced polyketide coupled to a serine via a peptide bond; either in extra- or intracellular transport. This chain is Acurin A biosynthesis cluster MFS-type transporter, found in Aspergillus aculeatus (strain ATCC 16872 / CBS 172.66 / WB 5094).